Here is a 460-residue protein sequence, read N- to C-terminus: MHLARELGVNLADQRLAQALDEADPLAHLRQEFSIPQMKDIKQADLKLVEAESDCIYLCGNSLGLMPKRTRTIVNEELDTWATGGVTGHFPDGPGKRPWVSIDETVTDKCARVVGALPEEVAIMNTLTVNLHLLMVSLAHTMARQVPFYRPTSDRFKILVEAKAFPSDHFAVLSQLRMHGHDESALIEVKPREGEHNIREEDLLAILEEQGDSIATVLVGGVHYYTGQFFDLQRLCAAAHNKGCTFGVDLAHAVGNVPLQLHDWDIDFACWCTYKYLNSGPGGIAGAFIHKKHEGTSRPYLQGWWGVQLNERFRMDHDASFMPGVRGLQLSNPGVLQTVALLGSLEIYEQTDMASLRAKSLKLTAYLEQLMQALVNEEGHAPRFEIITPTDPERRGCQLSILFKVDIDAAFEALEKRGVVCDVRRPDVMRIAPVPLYNTFTDVYRFVTTLRDALNASASS.

Pyridoxal 5'-phosphate contacts are provided by residues Leu-127, Thr-128, 165–168, Asp-249, His-252, and Tyr-274; that span reads FPSD. Lys-275 carries the post-translational modification N6-(pyridoxal phosphate)lysine. Positions 304 and 332 each coordinate pyridoxal 5'-phosphate.

This sequence belongs to the kynureninase family. In terms of assembly, homodimer. Requires pyridoxal 5'-phosphate as cofactor.

Its subcellular location is the cytoplasm. The catalysed reaction is L-kynurenine + H2O = anthranilate + L-alanine + H(+). It carries out the reaction 3-hydroxy-L-kynurenine + H2O = 3-hydroxyanthranilate + L-alanine + H(+). Its pathway is amino-acid degradation; L-kynurenine degradation; L-alanine and anthranilate from L-kynurenine: step 1/1. It participates in cofactor biosynthesis; NAD(+) biosynthesis; quinolinate from L-kynurenine: step 2/3. Its function is as follows. Catalyzes the cleavage of L-kynurenine (L-Kyn) and L-3-hydroxykynurenine (L-3OHKyn) into anthranilic acid (AA) and 3-hydroxyanthranilic acid (3-OHAA), respectively. The chain is Kynureninase from Monosiga brevicollis (Choanoflagellate).